The following is an 814-amino-acid chain: Dimethyl sulfoxide reductase DmsA (814 aa).

The tat-type signal signal peptide spans 1-45 (MKTKIPDAVLAAEVSRRGLVKTTAIGGLAMASSALTLPFSRIAHA). The region spanning 56–118 (EKVIWSACTV…SMRRRVYNPD (63 aa)) is the 4Fe-4S Mo/W bis-MGD-type domain. Positions 63, 67, 71, and 104 each coordinate [4Fe-4S] cluster. Residues 172 to 176 (LGGTM), serine 205, 244 to 245 (ET), 270 to 271 (ID), 291 to 293 (GTD), 386 to 387 (WG), arginine 390, asparagine 488, 512 to 513 (ID), histidine 701, 707 to 709 (HST), asparagine 788, and 804 to 805 (SH) each bind Mo-bis(molybdopterin guanine dinucleotide).

The protein belongs to the prokaryotic molybdopterin-containing oxidoreductase family. In terms of assembly, heterotrimeric enzyme composed of a catalytic heterodimer (DmsAB) and a membrane anchor protein (DmsC). [4Fe-4S] cluster is required as a cofactor. The cofactor is Mo-bis(molybdopterin guanine dinucleotide). Exported by the Tat system. The position of the signal peptide cleavage has been experimentally proven. Can also be exported by the Sec system.

It localises to the cell membrane. The enzyme catalyses dimethyl sulfide + a menaquinone + H2O = dimethyl sulfoxide + a menaquinol. With respect to regulation, inhibited by dithionite, sodium hydrogensulfite and tungstate. Functionally, catalyzes the reduction of dimethyl sulfoxide (DMSO) to dimethyl sulfide (DMS). DMSO reductase serves as the terminal reductase under anaerobic conditions, with DMSO being the terminal electron acceptor. Terminal reductase during anaerobic growth on various sulfoxides and N-oxide compounds. Allows E.coli to grow anaerobically on DMSO as respiratory oxidant. This Escherichia coli (strain K12) protein is Dimethyl sulfoxide reductase DmsA (dmsA).